Consider the following 242-residue polypeptide: Endoplasmic reticulum membrane protein complex subunit 7 (242 aa).

Residues 1–23 (MAAALWGFFPVLLLLLLSGDVQS) form the signal peptide. Topologically, residues 24-159 (SEVPGAAAEG…IKRESWGWTD (136 aa)) are lumenal. The chain crosses the membrane as a helical span at residues 160-180 (FLMNPMVMMMVLPLLIFVLLP). The Cytoplasmic segment spans residues 181–242 (KVVNTSDPDM…TGKSGAGKRR (62 aa)). A disordered region spans residues 217-242 (LFSSKSSGKSSSGSSKTGKSGAGKRR). Residues 219 to 235 (SSKSSGKSSSGSSKTGK) are compositionally biased toward low complexity.

This sequence belongs to the EMC7 family. In terms of assembly, component of the ER membrane protein complex (EMC).

Its subcellular location is the endoplasmic reticulum membrane. Its function is as follows. Part of the endoplasmic reticulum membrane protein complex (EMC) that enables the energy-independent insertion into endoplasmic reticulum membranes of newly synthesized membrane proteins. Preferentially accommodates proteins with transmembrane domains that are weakly hydrophobic or contain destabilizing features such as charged and aromatic residues. Involved in the cotranslational insertion of multi-pass membrane proteins in which stop-transfer membrane-anchor sequences become ER membrane spanning helices. It is also required for the post-translational insertion of tail-anchored/TA proteins in endoplasmic reticulum membranes. By mediating the proper cotranslational insertion of N-terminal transmembrane domains in an N-exo topology, with translocated N-terminus in the lumen of the ER, controls the topology of multi-pass membrane proteins like the G protein-coupled receptors. By regulating the insertion of various proteins in membranes, it is indirectly involved in many cellular processes. The polypeptide is Endoplasmic reticulum membrane protein complex subunit 7 (EMC7) (Homo sapiens (Human)).